Here is a 131-residue protein sequence, read N- to C-terminus: Protein DfrA (131 aa).

It belongs to the RutC family.

The polypeptide is Protein DfrA (dfrA) (Myxococcus xanthus).